The sequence spans 161 residues: 2-C-methyl-D-erythritol 2,4-cyclodiphosphate synthase (161 aa).

2 residues coordinate a divalent metal cation: Asp8 and His10. Residues 8-10 (DLH) and 34-35 (HS) contribute to the 4-CDP-2-C-methyl-D-erythritol 2-phosphate site. Position 42 (His42) interacts with a divalent metal cation. 4-CDP-2-C-methyl-D-erythritol 2-phosphate contacts are provided by residues 56–58 (DIG), 100–106 (AEYPKML), and Arg142.

The protein belongs to the IspF family. Homotrimer. A divalent metal cation is required as a cofactor.

It carries out the reaction 4-CDP-2-C-methyl-D-erythritol 2-phosphate = 2-C-methyl-D-erythritol 2,4-cyclic diphosphate + CMP. It functions in the pathway isoprenoid biosynthesis; isopentenyl diphosphate biosynthesis via DXP pathway; isopentenyl diphosphate from 1-deoxy-D-xylulose 5-phosphate: step 4/6. Its function is as follows. Involved in the biosynthesis of isopentenyl diphosphate (IPP) and dimethylallyl diphosphate (DMAPP), two major building blocks of isoprenoid compounds. Catalyzes the conversion of 4-diphosphocytidyl-2-C-methyl-D-erythritol 2-phosphate (CDP-ME2P) to 2-C-methyl-D-erythritol 2,4-cyclodiphosphate (ME-CPP) with a corresponding release of cytidine 5-monophosphate (CMP). This chain is 2-C-methyl-D-erythritol 2,4-cyclodiphosphate synthase, found in Buchnera aphidicola subsp. Acyrthosiphon pisum (strain 5A).